A 158-amino-acid chain; its full sequence is MISINMTIENAEWGDEKILYTITEKALIATIDRLSLTQVTSELSLLFTNNMRMAQINTQWRNKNKPTNVLSFPAFPLKAGQNPGPMLGDIVLARETIVYEAEEEGKSFHDHLTHMIVHGILHLLGYDHETDDEAYQMEELEKEILQKIAIKNPYTELL.

The Zn(2+) site is built by His118, His122, and His128.

Belongs to the endoribonuclease YbeY family. Zn(2+) is required as a cofactor.

Its subcellular location is the cytoplasm. Its function is as follows. Single strand-specific metallo-endoribonuclease involved in late-stage 70S ribosome quality control and in maturation of the 3' terminus of the 16S rRNA. The protein is Endoribonuclease YbeY of Bartonella bacilliformis (strain ATCC 35685 / KC583 / Herrer 020/F12,63).